Consider the following 1009-residue polypeptide: 2-oxoglutarate dehydrogenase, mitochondrial (1009 aa).

The N-terminal 39 residues, 1-39 (MLRFIPSSAKARALRRSAVTAYRLNRLTCLSSLQQNRTF), are a transit peptide targeting the mitochondrion. Thiamine diphosphate-binding residues include Arg-305, Asp-404, Asn-437, Ile-439, and Gln-669. The Mg(2+) site is built by Asp-404, Asn-437, and Ile-439.

This sequence belongs to the alpha-ketoglutarate dehydrogenase family. It depends on thiamine diphosphate as a cofactor. Requires Mg(2+) as cofactor.

The protein localises to the mitochondrion matrix. The catalysed reaction is N(6)-[(R)-lipoyl]-L-lysyl-[protein] + 2-oxoglutarate + H(+) = N(6)-[(R)-S(8)-succinyldihydrolipoyl]-L-lysyl-[protein] + CO2. Its activity is regulated as follows. Catabolite repressed. Functionally, the 2-oxoglutarate dehydrogenase complex catalyzes the overall conversion of 2-oxoglutarate to succinyl-CoA and CO(2). It contains multiple copies of three enzymatic components: 2-oxoglutarate dehydrogenase (E1), dihydrolipoamide succinyltransferase (E2) and lipoamide dehydrogenase (E3). This is 2-oxoglutarate dehydrogenase, mitochondrial (kgd1) from Schizosaccharomyces pombe (strain 972 / ATCC 24843) (Fission yeast).